A 511-amino-acid polypeptide reads, in one-letter code: Tyrosine--tRNA ligase, chloroplastic/mitochondrial (511 aa).

Tyrosine 118 contributes to the L-tyrosine binding site. ATP is bound at residue aspartate 122. The short motif at 123–132 is the 'HIGH' region element; the sequence is PTAESLHLGN. Residues aspartate 162, tyrosine 256, glutamine 260, aspartate 263, and glutamine 282 each contribute to the L-tyrosine site. Residues 318-322 carry the 'KMSKS' region motif; it reads KFGKS. Lysine 321 lines the ATP pocket. The 67-residue stretch at 444-510 folds into the S4 RNA-binding domain; sequence LSIVDLSVSA…GKKNKVVVRI (67 aa).

This sequence belongs to the class-I aminoacyl-tRNA synthetase family.

The protein resides in the plastid. The protein localises to the chloroplast. It localises to the mitochondrion. It catalyses the reaction tRNA(Tyr) + L-tyrosine + ATP = L-tyrosyl-tRNA(Tyr) + AMP + diphosphate + H(+). Its function is as follows. Catalyzes the attachment of tyrosine to tRNA(Tyr) in a two-step reaction: tyrosine is first activated by ATP to form Tyr-AMP and then transferred to the acceptor end of tRNA(Tyr). The protein is Tyrosine--tRNA ligase, chloroplastic/mitochondrial of Arabidopsis thaliana (Mouse-ear cress).